Consider the following 435-residue polypeptide: 3-phosphoshikimate 1-carboxyvinyltransferase (435 aa).

3-phosphoshikimate contacts are provided by Lys15, Ser16, and Arg20. Position 15 (Lys15) interacts with phosphoenolpyruvate. 2 residues coordinate phosphoenolpyruvate: Gly96 and Arg124. Residues Ser169, Gln171, Ser195, Asp318, and Lys345 each coordinate 3-phosphoshikimate. Residue Gln171 participates in phosphoenolpyruvate binding. The active-site Proton acceptor is Asp318. Residues Arg349 and Arg393 each coordinate phosphoenolpyruvate.

It belongs to the EPSP synthase family. Monomer.

The protein resides in the cytoplasm. The catalysed reaction is 3-phosphoshikimate + phosphoenolpyruvate = 5-O-(1-carboxyvinyl)-3-phosphoshikimate + phosphate. It functions in the pathway metabolic intermediate biosynthesis; chorismate biosynthesis; chorismate from D-erythrose 4-phosphate and phosphoenolpyruvate: step 6/7. In terms of biological role, catalyzes the transfer of the enolpyruvyl moiety of phosphoenolpyruvate (PEP) to the 5-hydroxyl of shikimate-3-phosphate (S3P) to produce enolpyruvyl shikimate-3-phosphate and inorganic phosphate. The chain is 3-phosphoshikimate 1-carboxyvinyltransferase from Chlorobium chlorochromatii (strain CaD3).